Reading from the N-terminus, the 641-residue chain is Epithelial sodium channel subunit beta (641 aa).

Residues 1 to 50 (MHVKKYLLKGLHRLQKGPGYTYKELLVWYCDNTNTHGPKRIICEGPKKKA) lie on the Cytoplasmic side of the membrane. Residues 51–71 (MWFVLTLLFTSLVCWQWGLFI) form a helical membrane-spanning segment. At 72–533 (KTYLNWEVSV…GGQFGFWMGG (462 aa)) the chain is on the extracellular side. Disulfide bonds link cysteine 98–cysteine 273, cysteine 185–cysteine 190, cysteine 197–cysteine 204, cysteine 250–cysteine 257, cysteine 362–cysteine 449, cysteine 387–cysteine 445, cysteine 391–cysteine 441, cysteine 400–cysteine 427, and cysteine 402–cysteine 416. A glycan (N-linked (GlcNAc...) asparagine) is linked at asparagine 141. An N-linked (GlcNAc...) asparagine glycan is attached at asparagine 379. A helical transmembrane segment spans residues 534–554 (SVLCLIEFGEIIIDFVWITII). Residues 555–641 (KLVALAKSVR…IESDSEGDAI (87 aa)) lie on the Cytoplasmic side of the membrane. The interval 597–624 (TPGPDVEAYPHEQNPPIPGTPPPNYDSL) is disordered. Residues 609–620 (QNPPIPGTPPPN) show a composition bias toward pro residues. Residues 617–621 (PPPNY) carry the PY motif; recruits WW domain-containing proteins and is thereby required for ubiquitination and inhibition of the channel by NEDD4 and NEDD4L motif. Phosphoserine occurs at positions 634 and 636.

It belongs to the amiloride-sensitive sodium channel (TC 1.A.6) family. SCNN1B subfamily. As to quaternary structure, component of the heterotrimeric epithelial sodium channel (ENaC) composed of an alpha/SCNN1A, a beta/SCNN1B and a gamma/SCNN1G subunit. An additional delta/SCNN1D subunit can replace the alpha/SCNN1A subunit to form an alternative channel with specific properties. Interacts with WWP1 (via WW domains). Interacts with WWP2 (via WW domains); inhibits the channel. Interacts with the full-length immature form of PCSK9 (pro-PCSK9). Interacts (N-glycosylated) with BPIFA1; the interaction is direct and inhibits the proteolytic processing of SCNN1A and SCNN1G and the activation of ENaC. Ubiquitinated. Can be ubiquitinated at multiple sites and undergo monoubiquitination and polyubiquitination. Ubiquitination by NEDD4 or NEDD4L inhibits the ENaC channel through endocytosis, intracellular retention and degradation of its individual subunits. However, some studies could not confirm the ubiquitination of this subunit of the ENaC. Post-translationally, phosphorylated on serine and threonine residues. Aldosterone and insulin increase the basal level of phosphorylation. In terms of processing, N-glycosylated. N-glycosylation is required for interaction with BPIFA1.

Its subcellular location is the apical cell membrane. It is found in the cytoplasmic vesicle membrane. It catalyses the reaction Na(+)(in) = Na(+)(out). With respect to regulation, originally identified and characterized by its inhibition by the diuretic drug amiloride. Its function is as follows. This is one of the three pore-forming subunits of the heterotrimeric epithelial sodium channel (ENaC), a critical regulator of sodium balance and fluid homeostasis. ENaC operates in epithelial tissues, where it mediates the electrodiffusion of sodium ions from extracellular fluid through the apical membrane of cells, with water following osmotically. It plays a key role in maintaining sodium homeostasis through electrogenic sodium reabsorption in the kidneys. Additionally, ENaC is essential for airway surface liquid homeostasis, which is crucial for proper mucus clearance. The chain is Epithelial sodium channel subunit beta from Bos taurus (Bovine).